A 455-amino-acid chain; its full sequence is Chromosomal replication initiator protein DnaA (455 aa).

Positions 1–82 (MNRNTSSLWA…NPDFVVKLVE (82 aa)) are domain I, interacts with DnaA modulators. The interval 82 to 117 (EGVKPAPKQNNIVTTKQNAETAVDSEQHLQSVEFKT) is domain II. The interval 118 to 335 (GLNSNHLFEN…GALNRVIANA (218 aa)) is domain III, AAA+ region. Residues Gly-163, Gly-165, Lys-166, and Thr-167 each contribute to the ATP site. The domain IV, binds dsDNA stretch occupies residues 336–455 (EFTGKTITID…WSNLIRTLSA (120 aa)).

It belongs to the DnaA family. As to quaternary structure, oligomerizes as a right-handed, spiral filament on DNA at oriC.

The protein localises to the cytoplasm. Plays an essential role in the initiation and regulation of chromosomal replication. ATP-DnaA binds to the origin of replication (oriC) to initiate formation of the DNA replication initiation complex once per cell cycle. Binds the DnaA box (a 9 base pair repeat at the origin) and separates the double-stranded (ds)DNA. Forms a right-handed helical filament on oriC DNA; dsDNA binds to the exterior of the filament while single-stranded (ss)DNA is stabiized in the filament's interior. The ATP-DnaA-oriC complex binds and stabilizes one strand of the AT-rich DNA unwinding element (DUE), permitting loading of DNA polymerase. After initiation quickly degrades to an ADP-DnaA complex that is not apt for DNA replication. Binds acidic phospholipids. The protein is Chromosomal replication initiator protein DnaA of Actinobacillus succinogenes (strain ATCC 55618 / DSM 22257 / CCUG 43843 / 130Z).